The following is a 104-amino-acid chain: NADH-quinone oxidoreductase subunit K (104 aa).

The next 3 helical transmembrane spans lie at 4–24 (VPASAYLTLAIILFCIGLFGA), 31–51 (VIVLVCIELMLNAANLNLVAF), and 67–87 (LFTMAVAAAEAAVGLAILIAL).

This sequence belongs to the complex I subunit 4L family. As to quaternary structure, NDH-1 is composed of 14 different subunits. Subunits NuoA, H, J, K, L, M, N constitute the membrane sector of the complex.

It localises to the cell membrane. It catalyses the reaction a quinone + NADH + 5 H(+)(in) = a quinol + NAD(+) + 4 H(+)(out). In terms of biological role, NDH-1 shuttles electrons from NADH, via FMN and iron-sulfur (Fe-S) centers, to quinones in the respiratory chain. The immediate electron acceptor for the enzyme in this species is believed to be a menaquinone. Couples the redox reaction to proton translocation (for every two electrons transferred, four hydrogen ions are translocated across the cytoplasmic membrane), and thus conserves the redox energy in a proton gradient. The protein is NADH-quinone oxidoreductase subunit K of Bacillus cereus (strain Q1).